The following is a 437-amino-acid chain: UDP-N-acetylmuramate--L-alanine ligase (437 aa).

Position 108–114 (108–114 (GAHGKTS)) interacts with ATP.

This sequence belongs to the MurCDEF family.

Its subcellular location is the cytoplasm. It catalyses the reaction UDP-N-acetyl-alpha-D-muramate + L-alanine + ATP = UDP-N-acetyl-alpha-D-muramoyl-L-alanine + ADP + phosphate + H(+). Its pathway is cell wall biogenesis; peptidoglycan biosynthesis. Functionally, cell wall formation. This Staphylococcus epidermidis (strain ATCC 12228 / FDA PCI 1200) protein is UDP-N-acetylmuramate--L-alanine ligase.